The following is a 569-amino-acid chain: Probable protein phosphatase 2C BIPP2C1 (569 aa).

2 disordered regions span residues 120-214 and 251-279; these read EVSP…KVTG and SLDD…GSSI. Over residues 179 to 188 the composition is skewed to basic and acidic residues; the sequence is ESERGSDADG. One can recognise a PPM-type phosphatase domain in the interval 329–564; the sequence is AAMLPHPSKV…DDVTVVVSVV (236 aa). Residues aspartate 358, glycine 359, aspartate 488, and aspartate 555 each contribute to the Mn(2+) site.

The protein belongs to the PP2C family. The cofactor is Mg(2+). It depends on Mn(2+) as a cofactor.

The enzyme catalyses O-phospho-L-seryl-[protein] + H2O = L-seryl-[protein] + phosphate. It carries out the reaction O-phospho-L-threonyl-[protein] + H2O = L-threonyl-[protein] + phosphate. May play a role in responses to biotic and abiotic stresses. This is Probable protein phosphatase 2C BIPP2C1 (BIPP2C1) from Oryza sativa subsp. japonica (Rice).